The following is a 214-amino-acid chain: MDLHFENIRREYDKRSLSASDLTPTPFDLVTRWLQDAVEAKTYEPTAVIVGTATPDGHPSTRTVLLKEFMNNEFIFYSNYESRKGQQMAANPHVCLTFLWHELERQIHVEGDVRILEPELSDAYFATRPYKSRVGARISPQSRPIPGRSFIVQEFMKESLKYAGRTVPRPDTWGGFAVKPVRIEFWQGRESRLHDRFLYELRPDASWSVHRLAP.

Substrate is bound by residues 9–12 and lysine 67; that span reads RREY. FMN is bound by residues 62-67, 77-78, arginine 83, lysine 84, and glutamine 106; these read RTVLLK and YS. Tyrosine 124, arginine 128, and serine 132 together coordinate substrate. Residues 141–142 and tryptophan 186 contribute to the FMN site; that span reads QS. 192 to 194 is a substrate binding site; sequence RLH. Arginine 196 is a binding site for FMN.

It belongs to the pyridoxamine 5'-phosphate oxidase family. As to quaternary structure, homodimer. FMN is required as a cofactor.

It carries out the reaction pyridoxamine 5'-phosphate + O2 + H2O = pyridoxal 5'-phosphate + H2O2 + NH4(+). The catalysed reaction is pyridoxine 5'-phosphate + O2 = pyridoxal 5'-phosphate + H2O2. Its pathway is cofactor metabolism; pyridoxal 5'-phosphate salvage; pyridoxal 5'-phosphate from pyridoxamine 5'-phosphate: step 1/1. It participates in cofactor metabolism; pyridoxal 5'-phosphate salvage; pyridoxal 5'-phosphate from pyridoxine 5'-phosphate: step 1/1. Functionally, catalyzes the oxidation of either pyridoxine 5'-phosphate (PNP) or pyridoxamine 5'-phosphate (PMP) into pyridoxal 5'-phosphate (PLP). The protein is Pyridoxine/pyridoxamine 5'-phosphate oxidase of Porphyromonas gingivalis (strain ATCC BAA-308 / W83).